The chain runs to 581 residues: Protein SPT2 homolog (581 aa).

Over residues 26–35 (YYSTKYSPPK) the composition is skewed to low complexity. Disordered stretches follow at residues 26 to 50 (YYSTKYSPPKKQSKESKQLSSNIQK) and 145 to 495 (QEDK…EYDS). Residues 36-76 (KQSKESKQLSSNIQKFLQKKEAEEAEKKRLERQKLNDLLAK) adopt a coiled-coil conformation. The segment covering 162-181 (SGTKERVKAAITREREEAKG) has biased composition (basic and acidic residues). 2 stretches are compositionally biased toward polar residues: residues 182-197 (NTRQKSSTSTLPSSAT) and 204-213 (VARSYSTSKT). Basic and acidic residues-rich tracts occupy residues 218-236 (NAEKLEEERKKRQEEEQRR) and 256-312 (LAEK…KETP). The stretch at 276 to 307 (ERLLSAREKRELEERQRQQEQRAQRLKMRESE) forms a coiled coil. Positions 352 to 376 (SSASSTSLSSSNSHSSASRSSVSSS) are enriched in low complexity. The segment covering 447–461 (TRQTPSSDVQRSQGG) has biased composition (polar residues). The span at 486–495 (DDDDEDEYDS) shows a compositional bias: acidic residues.

The protein belongs to the SPT2 family.

The protein is Protein SPT2 homolog of Drosophila melanogaster (Fruit fly).